A 371-amino-acid polypeptide reads, in one-letter code: Cytochrome b (371 aa).

The next 4 helical transmembrane spans lie at 25-45 (FGSM…FLAV), 69-90 (WMMQ…YIHI), 105-125 (WMSG…GYVL), and 170-190 (FFAL…LHII). The heme b site is built by H75 and H89. Heme b is bound by residues H174 and H188. H193 is a binding site for a ubiquinone. The next 4 helical transmembrane spans lie at 218 to 238 (YKDL…VSFF), 280 to 300 (LGGA…PFTH), 312 to 332 (LSQL…WAAT), and 339 to 358 (YIII…ISMP).

The protein belongs to the cytochrome b family. In terms of assembly, the cytochrome bc1 complex contains 3 respiratory subunits (MT-CYB, CYC1 and UQCRFS1), 2 core proteins (UQCRC1 and UQCRC2) and probably 6 low-molecular weight proteins. Requires heme b as cofactor.

The protein localises to the mitochondrion inner membrane. Functionally, component of the ubiquinol-cytochrome c reductase complex (complex III or cytochrome b-c1 complex) that is part of the mitochondrial respiratory chain. The b-c1 complex mediates electron transfer from ubiquinol to cytochrome c. Contributes to the generation of a proton gradient across the mitochondrial membrane that is then used for ATP synthesis. The sequence is that of Cytochrome b (MT-CYB) from Python molurus (Indian python).